Consider the following 359-residue polypeptide: Peptide chain release factor 1 (359 aa).

Glutamine 232 is modified (N5-methylglutamine).

It belongs to the prokaryotic/mitochondrial release factor family. Methylated by PrmC. Methylation increases the termination efficiency of RF1.

The protein resides in the cytoplasm. Peptide chain release factor 1 directs the termination of translation in response to the peptide chain termination codons UAG and UAA. The sequence is that of Peptide chain release factor 1 from Lawsonia intracellularis (strain PHE/MN1-00).